The following is a 436-amino-acid chain: GTPase Der (436 aa).

2 consecutive EngA-type G domains span residues 4–167 (PTVA…PNEI) and 175–351 (IKFS…HAQN). GTP-binding positions include 10–17 (GRPNVGKS), 57–61 (DTGGI), 119–122 (NKVD), 181–188 (GRPNVGKS), 229–233 (DTAGM), and 294–297 (NKWD). The KH-like domain occupies 352 to 436 (LRISSSVLND…PVHLIARKRK (85 aa)).

This sequence belongs to the TRAFAC class TrmE-Era-EngA-EngB-Septin-like GTPase superfamily. EngA (Der) GTPase family. Associates with the 50S ribosomal subunit.

Its function is as follows. GTPase that plays an essential role in the late steps of ribosome biogenesis. This is GTPase Der from Lactococcus lactis subsp. lactis (strain IL1403) (Streptococcus lactis).